The sequence spans 187 residues: NADPH-dependent 3-demethoxyubiquinone 3-hydroxylase, mitochondrial (187 aa).

The N-terminal 8 residues, 1–8, are a transit peptide targeting the mitochondrion; it reads MFRVITRG. Lys21 is a binding site for NADH. A run of 2 repeats spans residues 28–99 and 100–187. The interval 28 to 187 is 2 X approximate tandem repeats; it reads AGELGADRIY…KGAIAIAEKI (160 aa). Fe cation is bound by residues Glu30, Glu60, His63, Glu112, Glu148, and His151. Lys186 contributes to the NADH binding site.

This sequence belongs to the COQ7 family. Component of a multi-subunit COQ enzyme complex. Fe cation serves as cofactor.

The protein resides in the mitochondrion inner membrane. The protein localises to the mitochondrion. It localises to the nucleus. The enzyme catalyses a 5-methoxy-2-methyl-3-(all-trans-polyprenyl)benzoquinone + NADH + O2 = a 3-demethylubiquinone + NAD(+) + H2O. It functions in the pathway cofactor biosynthesis; ubiquinone biosynthesis. Catalyzes the hydroxylation of the 5-methoxy-2-methyl-3-(all-trans-polyprenyl)benzoquinone at the C6 position and participates in the biosynthesis of ubiquinone. Catalyzes the reaction through a substrate-mediated reduction pathway, whereby NADH shuttles electrons to 5-methoxy-2-methyl-3-(all-trans-decaprenyl)benzoquinone, which then transfers the electrons to the two Fe(3+) centers. The binding of 5-methoxy-2-methyl-3-(all-trans-polyprenyl)benzoquinone (DMQn) mediates reduction of the diiron center by nicotinamide adenine dinucleotide (NADH) and initiates oxygen activation for subsequent DMQ hydroxylation. Also has a structural role in the COQ enzyme complex, stabilizing other COQ polypeptides. Involved in lifespan determination in a ubiquinone-independent manner. Plays a role in modulating mitochondrial stress responses, acting in the nucleus, perhaps via regulating gene expression, independent of its characterized mitochondrial function in ubiquinone biosynthesis. Plays a role in modulating polyribosome formation. The polypeptide is NADPH-dependent 3-demethoxyubiquinone 3-hydroxylase, mitochondrial (Caenorhabditis elegans).